We begin with the raw amino-acid sequence, 340 residues long: Putative UPF0607 protein ENSP00000332738 (340 aa).

Residues 75-90 are compositionally biased toward basic and acidic residues; that stretch reads VRAEEPKEATEVKDQV. Disordered stretches follow at residues 75–130 and 215–281; these read VRAE…NPRP and GLLM…KLPC. Polar residues predominate over residues 91–126; it reads ETQGQEDNKTGPCSNGKAASTSRPLETQGNLTSSWY. Low complexity predominate over residues 228–241; it reads PAALRSSRSSPPRA. Residues 242–251 show a composition bias toward basic residues; that stretch reads AGHRPRKRKL. A compositionally biased stretch (low complexity) spans 254 to 266; sequence PPLQLQQTPPLQL.

It belongs to the UPF0607 family.

The chain is Putative UPF0607 protein ENSP00000332738 from Homo sapiens (Human).